Here is a 391-residue protein sequence, read N- to C-terminus: Nuclear hormone receptor family member nhr-115 (391 aa).

The nuclear receptor DNA-binding region spans Leu-5–Tyr-77. The NR C4-type zinc finger occupies Cys-8 to Cys-28. Residues Ala-41–Cys-65 form an NR C4-type; atypical zinc finger. Positions Tyr-130 to Ser-388 constitute an NR LBD domain.

The protein belongs to the nuclear hormone receptor family.

The protein localises to the nucleus. Its function is as follows. Orphan nuclear receptor. This chain is Nuclear hormone receptor family member nhr-115 (nhr-115), found in Caenorhabditis elegans.